The chain runs to 302 residues: MGPTACGKSQLAICLRKYLSIELISVDSALIYRGMDIGTDKPSFSDLYNHPHRLLNIKDPVENYSAAEFQKDVLREIDEIIKLGKIPCLVGGSMFYYNVLLHGLSILPPSNIKLREYLIQKSYEKNYLYKKLKLIDPISASRIHKNDFQRLIRALEIFYLSGKSLTELKKKNNYKLPYNIFQFAIIPPNKEWLNNKIELRIKKMLMLGFQKEVEILFLRGDLHKNLPSIRCIGYRQMWEYLEYKNSYKDMFNKTIHATRKLAKHQLTWLKNWKNINKIEYHSTSTILAKKVLDVLEKNDFSV.

2-9 contacts ATP; that stretch reads GPTACGKS. 4–9 contacts substrate; that stretch reads TACGKS. 2 interaction with substrate tRNA regions span residues 27–30 and 149–153; these read DSAL and QRLIR.

This sequence belongs to the IPP transferase family. In terms of assembly, monomer. The cofactor is Mg(2+).

It carries out the reaction adenosine(37) in tRNA + dimethylallyl diphosphate = N(6)-dimethylallyladenosine(37) in tRNA + diphosphate. Functionally, catalyzes the transfer of a dimethylallyl group onto the adenine at position 37 in tRNAs that read codons beginning with uridine, leading to the formation of N6-(dimethylallyl)adenosine (i(6)A). The sequence is that of tRNA dimethylallyltransferase from Buchnera aphidicola subsp. Acyrthosiphon pisum (strain 5A).